We begin with the raw amino-acid sequence, 75 residues long: uncharacterized protein (75 aa).

This is an uncharacterized protein from Dryophytes versicolor (chameleon treefrog).